Consider the following 612-residue polypeptide: Dihydroxy-acid dehydratase (612 aa).

D81 contributes to the Mg(2+) binding site. C122 contributes to the [2Fe-2S] cluster binding site. Mg(2+) is bound by residues D123 and K124. Position 124 is an N6-carboxylysine (K124). C195 provides a ligand contact to [2Fe-2S] cluster. E491 serves as a coordination point for Mg(2+). S517 acts as the Proton acceptor in catalysis.

It belongs to the IlvD/Edd family. Homodimer. It depends on [2Fe-2S] cluster as a cofactor. The cofactor is Mg(2+).

The enzyme catalyses (2R)-2,3-dihydroxy-3-methylbutanoate = 3-methyl-2-oxobutanoate + H2O. The catalysed reaction is (2R,3R)-2,3-dihydroxy-3-methylpentanoate = (S)-3-methyl-2-oxopentanoate + H2O. It participates in amino-acid biosynthesis; L-isoleucine biosynthesis; L-isoleucine from 2-oxobutanoate: step 3/4. The protein operates within amino-acid biosynthesis; L-valine biosynthesis; L-valine from pyruvate: step 3/4. Its function is as follows. Functions in the biosynthesis of branched-chain amino acids. Catalyzes the dehydration of (2R,3R)-2,3-dihydroxy-3-methylpentanoate (2,3-dihydroxy-3-methylvalerate) into 2-oxo-3-methylpentanoate (2-oxo-3-methylvalerate) and of (2R)-2,3-dihydroxy-3-methylbutanoate (2,3-dihydroxyisovalerate) into 2-oxo-3-methylbutanoate (2-oxoisovalerate), the penultimate precursor to L-isoleucine and L-valine, respectively. The protein is Dihydroxy-acid dehydratase of Rhizobium johnstonii (strain DSM 114642 / LMG 32736 / 3841) (Rhizobium leguminosarum bv. viciae).